Here is a 399-residue protein sequence, read N- to C-terminus: Methylthioribose kinase (399 aa).

ATP contacts are provided by residues Asn-40, Lys-57, and 111 to 113; that span reads EDL. Residue Asp-229 coordinates substrate. An ATP-binding site is contributed by 246 to 248; sequence DAE. Residue Arg-344 participates in substrate binding.

The protein belongs to the methylthioribose kinase family. As to quaternary structure, homodimer.

The enzyme catalyses 5-(methylsulfanyl)-D-ribose + ATP = 5-(methylsulfanyl)-alpha-D-ribose 1-phosphate + ADP + H(+). It functions in the pathway amino-acid biosynthesis; L-methionine biosynthesis via salvage pathway; S-methyl-5-thio-alpha-D-ribose 1-phosphate from S-methyl-5'-thioadenosine (hydrolase route): step 2/2. Catalyzes the phosphorylation of methylthioribose into methylthioribose-1-phosphate. The sequence is that of Methylthioribose kinase from Yersinia enterocolitica serotype O:8 / biotype 1B (strain NCTC 13174 / 8081).